The primary structure comprises 152 residues: Transmembrane protein 35B (152 aa).

The first 21 residues, 1-21, serve as a signal peptide directing secretion; the sequence is MLVSLGALRVLLGIFFTLTGA. The next 3 membrane-spanning stretches (helical) occupy residues 62-82, 85-105, and 111-131; these read AAVG…PPVL, ISNV…VVLE, and YIPA…QFLV.

The protein belongs to the DoxX family.

The protein resides in the membrane. The protein is Transmembrane protein 35B of Rattus norvegicus (Rat).